The sequence spans 241 residues: Triosephosphate isomerase (241 aa).

9–11 (NWK) is a binding site for substrate. Residue His96 is the Electrophile of the active site. Glu165 (proton acceptor) is an active-site residue. Residues Gly171, Ser204, and 225 to 226 (GG) contribute to the substrate site.

This sequence belongs to the triosephosphate isomerase family. In terms of assembly, homodimer.

The protein localises to the cytoplasm. The catalysed reaction is D-glyceraldehyde 3-phosphate = dihydroxyacetone phosphate. Its pathway is carbohydrate biosynthesis; gluconeogenesis. It functions in the pathway carbohydrate degradation; glycolysis; D-glyceraldehyde 3-phosphate from glycerone phosphate: step 1/1. In terms of biological role, involved in the gluconeogenesis. Catalyzes stereospecifically the conversion of dihydroxyacetone phosphate (DHAP) to D-glyceraldehyde-3-phosphate (G3P). This Gloeothece citriformis (strain PCC 7424) (Cyanothece sp. (strain PCC 7424)) protein is Triosephosphate isomerase.